The following is a 154-amino-acid chain: Iron-sulfur cluster assembly 2 homolog, mitochondrial (154 aa).

The N-terminal 8 residues, Met-1 to Ser-8, are a transit peptide targeting the mitochondrion. Residues Cys-79, Cys-144, and Cys-146 each coordinate Fe cation.

The protein belongs to the HesB/IscA family. Heterotetramer; forms a dimer of dimers with IBA57. Interacts with [2Fe-2S]-ISCA2 forming the heterodimer [2Fe- 2S]-ISCA2-IBA57 complex; [2Fe-2S] cluster binding is absolutely required to promote the complex formation.

Its subcellular location is the mitochondrion. Its function is as follows. Involved in the maturation of mitochondrial 4Fe-4S proteins functioning late in the iron-sulfur cluster assembly pathway. May be involved in the binding of an intermediate of Fe/S cluster assembly. This Mus musculus (Mouse) protein is Iron-sulfur cluster assembly 2 homolog, mitochondrial (Isca2).